The following is a 310-amino-acid chain: Glycerol-3-phosphate dehydrogenase [NAD(P)+] (310 aa).

The NADPH site is built by Trp19, Arg39, Arg40, and Lys87. Residues Lys87 and Gly115 each coordinate sn-glycerol 3-phosphate. Ser119 is an NADPH binding site. Lys170, Asp223, Ser233, Arg234, and Asn235 together coordinate sn-glycerol 3-phosphate. Lys170 (proton acceptor) is an active-site residue. Arg234 is an NADPH binding site. Glu260 lines the NADPH pocket.

This sequence belongs to the NAD-dependent glycerol-3-phosphate dehydrogenase family.

The protein resides in the cytoplasm. It catalyses the reaction sn-glycerol 3-phosphate + NAD(+) = dihydroxyacetone phosphate + NADH + H(+). It carries out the reaction sn-glycerol 3-phosphate + NADP(+) = dihydroxyacetone phosphate + NADPH + H(+). It participates in membrane lipid metabolism; glycerophospholipid metabolism. In terms of biological role, catalyzes the reduction of the glycolytic intermediate dihydroxyacetone phosphate (DHAP) to sn-glycerol 3-phosphate (G3P), the key precursor for phospholipid synthesis. The protein is Glycerol-3-phosphate dehydrogenase [NAD(P)+] of Synechococcus sp. (strain JA-3-3Ab) (Cyanobacteria bacterium Yellowstone A-Prime).